Consider the following 319-residue polypeptide: HTH-type transcriptional regulator YidZ (319 aa).

Positions 8-65 (LDLNLLLCLQLLMQERSVTKAAKRINVTPSAVSKSLAKLRAWFDDPLFVNSPLGLSPT) constitute an HTH lysR-type domain. Positions 25–44 (VTKAAKRINVTPSAVSKSLA) form a DNA-binding region, H-T-H motif.

It belongs to the LysR transcriptional regulatory family.

In terms of biological role, involved in anaerobic NO protection. This is HTH-type transcriptional regulator YidZ from Escherichia coli (strain K12 / MC4100 / BW2952).